Reading from the N-terminus, the 305-residue chain is MPIKIPADLPAYDVLTREGVMVMDPDQAARQDIRPLRIGLLNLMPKKIQTENQFARLIGATPLQIELSLIRMSEHQTKNTAAEHMESFYRPFQDIKSEKFDGLIITGAPIEHLDFQDVTYWDELREVMDWTQTNVHSTFGVCWGGMAMINHFHGVRKHMLEAKAFGCFRHRNLAPASPYLRGFSDECVIPVSRWTEMRQSEIDAAEGLKTLLGSDQVGPCLVQDKAHRALYIFNHFEYDSETLKQEYDRDVAAGNQINVPLNYYPDDDPSRAPLNRWRSHAHLLYGNWLTEIYQDTPYDIDAIGR.

The Acyl-thioester intermediate role is filled by cysteine 142. Substrate is bound by residues lysine 163 and serine 192. The active-site Proton acceptor is the histidine 235. The active site involves glutamate 237. Residue arginine 249 participates in substrate binding.

The protein belongs to the MetA family.

The protein resides in the cytoplasm. The enzyme catalyses L-homoserine + acetyl-CoA = O-acetyl-L-homoserine + CoA. Its pathway is amino-acid biosynthesis; L-methionine biosynthesis via de novo pathway; O-acetyl-L-homoserine from L-homoserine: step 1/1. In terms of biological role, transfers an acetyl group from acetyl-CoA to L-homoserine, forming acetyl-L-homoserine. This chain is Homoserine O-acetyltransferase, found in Roseobacter denitrificans (strain ATCC 33942 / OCh 114) (Erythrobacter sp. (strain OCh 114)).